Consider the following 63-residue polypeptide: Small ribosomal subunit protein bS21 (63 aa).

Belongs to the bacterial ribosomal protein bS21 family.

The sequence is that of Small ribosomal subunit protein bS21 from Phocaeicola vulgatus (strain ATCC 8482 / DSM 1447 / JCM 5826 / CCUG 4940 / NBRC 14291 / NCTC 11154) (Bacteroides vulgatus).